The following is a 156-amino-acid chain: Small ribosomal subunit protein uS7 (156 aa).

This sequence belongs to the universal ribosomal protein uS7 family. In terms of assembly, part of the 30S ribosomal subunit. Contacts proteins S9 and S11.

Its function is as follows. One of the primary rRNA binding proteins, it binds directly to 16S rRNA where it nucleates assembly of the head domain of the 30S subunit. Is located at the subunit interface close to the decoding center, probably blocks exit of the E-site tRNA. The sequence is that of Small ribosomal subunit protein uS7 from Streptococcus uberis (strain ATCC BAA-854 / 0140J).